We begin with the raw amino-acid sequence, 447 residues long: Argininosuccinate synthase (447 aa).

Residues 17 to 25 and Ala-43 each bind ATP; that span reads AFSGGLDTS. An L-citrulline-binding site is contributed by Tyr-99. 2 residues coordinate ATP: Gly-129 and Thr-131. The L-aspartate site is built by Thr-131, Asn-135, and Asp-136. Position 135 (Asn-135) interacts with L-citrulline. Residue Asp-136 coordinates ATP. The L-citrulline site is built by Arg-139 and Ser-192. Asp-194 contributes to the ATP binding site. Positions 201, 203, and 280 each coordinate L-citrulline.

Belongs to the argininosuccinate synthase family. Type 2 subfamily. Homotetramer.

The protein localises to the cytoplasm. The catalysed reaction is L-citrulline + L-aspartate + ATP = 2-(N(omega)-L-arginino)succinate + AMP + diphosphate + H(+). It participates in amino-acid biosynthesis; L-arginine biosynthesis; L-arginine from L-ornithine and carbamoyl phosphate: step 2/3. This Escherichia coli O157:H7 protein is Argininosuccinate synthase (argG).